Reading from the N-terminus, the 497-residue chain is uncharacterized protein (497 aa).

Ca(2+)-binding residues include D12, T13, and C52. C52 (nucleophile) is an active-site residue. C52 is subject to 3-oxoalanine (Cys). H102 is a catalytic residue. Ca(2+) is bound by residues D284 and H285.

The protein belongs to the sulfatase family. Ca(2+) is required as a cofactor. The conversion to 3-oxoalanine (also known as C-formylglycine, FGly), of a serine or cysteine residue in prokaryotes and of a cysteine residue in eukaryotes, is critical for catalytic activity.

This is an uncharacterized protein from Escherichia coli (strain K12).